Here is a 308-residue protein sequence, read N- to C-terminus: Mu-like prophage FluMu major head subunit (308 aa).

This sequence to phage Mu protein T.

The protein is Mu-like prophage FluMu major head subunit of Haemophilus influenzae (strain ATCC 51907 / DSM 11121 / KW20 / Rd).